A 535-amino-acid chain; its full sequence is UDP-N-acetylmuramoyl-L-alanyl-D-glutamate--2,6-diaminopimelate ligase (535 aa).

Leucine 67 serves as a coordination point for UDP-N-acetyl-alpha-D-muramoyl-L-alanyl-D-glutamate. Residue 153-159 coordinates ATP; that stretch reads GTSGKTT. UDP-N-acetyl-alpha-D-muramoyl-L-alanyl-D-glutamate is bound by residues 195 to 196, serine 222, and arginine 230; that span reads TT. Lysine 262 carries the N6-carboxylysine modification. Residues arginine 424, 448-451, glycine 502, and glutamate 506 each bind meso-2,6-diaminopimelate; that span reads DNPR. A Meso-diaminopimelate recognition motif motif is present at residues 448–451; sequence DNPR.

The protein belongs to the MurCDEF family. MurE subfamily. Mg(2+) serves as cofactor. In terms of processing, carboxylation is probably crucial for Mg(2+) binding and, consequently, for the gamma-phosphate positioning of ATP.

The protein resides in the cytoplasm. It catalyses the reaction UDP-N-acetyl-alpha-D-muramoyl-L-alanyl-D-glutamate + meso-2,6-diaminopimelate + ATP = UDP-N-acetyl-alpha-D-muramoyl-L-alanyl-gamma-D-glutamyl-meso-2,6-diaminopimelate + ADP + phosphate + H(+). The protein operates within cell wall biogenesis; peptidoglycan biosynthesis. Functionally, catalyzes the addition of meso-diaminopimelic acid to the nucleotide precursor UDP-N-acetylmuramoyl-L-alanyl-D-glutamate (UMAG) in the biosynthesis of bacterial cell-wall peptidoglycan. In Mycobacterium bovis (strain ATCC BAA-935 / AF2122/97), this protein is UDP-N-acetylmuramoyl-L-alanyl-D-glutamate--2,6-diaminopimelate ligase.